The sequence spans 262 residues: tRNA (guanine-N(7)-)-methyltransferase (262 aa).

Residues 1–58 (MLPQDTNTDPLPGDDAESASGKSADASQGTPNPGDEVAHPRRIRSFVRRAGRTSTGQQ) form a disordered region. The segment covering 40–51 (PRRIRSFVRRAG) has biased composition (basic residues). Residues E92, E117, D144, and D167 each contribute to the S-adenosyl-L-methionine site. D167 is a catalytic residue. K171 is a binding site for substrate. The interval 173–178 (RHNKRR) is interaction with RNA. Substrate-binding positions include D203 and 241–244 (TKFE).

Belongs to the class I-like SAM-binding methyltransferase superfamily. TrmB family.

It carries out the reaction guanosine(46) in tRNA + S-adenosyl-L-methionine = N(7)-methylguanosine(46) in tRNA + S-adenosyl-L-homocysteine. Its pathway is tRNA modification; N(7)-methylguanine-tRNA biosynthesis. In terms of biological role, catalyzes the formation of N(7)-methylguanine at position 46 (m7G46) in tRNA. This Cupriavidus metallidurans (strain ATCC 43123 / DSM 2839 / NBRC 102507 / CH34) (Ralstonia metallidurans) protein is tRNA (guanine-N(7)-)-methyltransferase.